Here is a 334-residue protein sequence, read N- to C-terminus: Aspartate carbamoyltransferase catalytic subunit (334 aa).

Residues R71 and T72 each coordinate carbamoyl phosphate. Residue K99 coordinates L-aspartate. 3 residues coordinate carbamoyl phosphate: R121, H151, and Q154. The L-aspartate site is built by R184 and R239. Carbamoyl phosphate is bound by residues G280 and P281.

It belongs to the aspartate/ornithine carbamoyltransferase superfamily. ATCase family. In terms of assembly, heterododecamer (2C3:3R2) of six catalytic PyrB chains organized as two trimers (C3), and six regulatory PyrI chains organized as three dimers (R2).

It carries out the reaction carbamoyl phosphate + L-aspartate = N-carbamoyl-L-aspartate + phosphate + H(+). The protein operates within pyrimidine metabolism; UMP biosynthesis via de novo pathway; (S)-dihydroorotate from bicarbonate: step 2/3. In terms of biological role, catalyzes the condensation of carbamoyl phosphate and aspartate to form carbamoyl aspartate and inorganic phosphate, the committed step in the de novo pyrimidine nucleotide biosynthesis pathway. In Pseudomonas putida (strain ATCC 47054 / DSM 6125 / CFBP 8728 / NCIMB 11950 / KT2440), this protein is Aspartate carbamoyltransferase catalytic subunit.